Here is a 385-residue protein sequence, read N- to C-terminus: Meiotic recombination protein SPO11-2 (385 aa).

The region spanning 24–169 is the Topo IIA-type catalytic domain; the sequence is LPPAEVRARI…LGIMASSRGA (146 aa). Tyr-126 (O-(5'-phospho-DNA)-tyrosine intermediate) is an active-site residue. The Mg(2+) site is built by Glu-219 and Asp-272.

It belongs to the TOP6A family. As to quaternary structure, interacts with TOP6B. Mg(2+) is required as a cofactor. In terms of tissue distribution, highly expressed in flowers before pollination. Expressed in roots and shoots.

It localises to the nucleus. The enzyme catalyses ATP-dependent breakage, passage and rejoining of double-stranded DNA.. Required for meiotic recombination. Mediates DNA cleavage that forms the double-strand breaks (DSB) that initiate meiotic recombination. The sequence is that of Meiotic recombination protein SPO11-2 (SPO11-2) from Oryza sativa subsp. indica (Rice).